Consider the following 262-residue polypeptide: Dimeric xanthone biosynthesis cluster protein R11 (262 aa).

Positions 69–160 (IADLLFYTKT…PQLFKHLNDE (92 aa)) are hemerythrin-like.

The protein operates within secondary metabolite biosynthesis. Its function is as follows. Part of the gene cluster that mediates the biosynthesis of the dimeric xanthones cryptosporioptides. The pathway begins with the synthesis of atrochrysone thioester by the polyketide synthase dmx-nrPKS. The atrochrysone carboxyl ACP thioesterase dmxR1 then breaks the thioester bond and releases the atrochrysone carboxylic acid from dmx-nrPKS. Atrochrysone carboxylic acid is decarboxylated by the decarboxylase dmxR15, and oxidized by the anthrone oxygenase dmxR16 to yield emodin. Emodin is then reduced to emodin hydroquinone by the oxidoreductase dmxR7. A-ring reduction by the short chain dehydrogenase dmxR18, dehydration by the scytalone dehydratase-like protein dmxR17 and probable spontaneous re-oxidation, results in overall deoxygenation to chrysophanol. Baeyer-Villiger oxidation by the Baeyer-Villiger monooxygenase (BVMO) dmxR6 then yields monodictylactone in equilibrium with monodictyphenone. In the case of the cryptosporioptides biosynthesis, monodictylactone is reduced at C-12 to an alcohol (by the short chain dehydrogenases dmxR12 or dmxR8) and hydroxylated at C-5 by dmxR9, yielding the electron-rich aromatic which could eliminate H(2)O to form the ortho-quinonemethide, followed by tautomerisation to paraquinone and complete the formal reduction to produce the 10-methylgroup. Conjugate addition of C-4a-OH to the resulting paraquinone by the monooxygenase dmxR10 then gives cyclohexadienone, which is then reduced at C-5 by the short chain dehydrogenase dmxR3 to give the dihydroxanthone. The 6,7-epoxide in the cryptosporioptides could be introduced by the cytochrome P450 monooxygenase dmxL3. The highly reducing PKS dmxL2 manufactures butyrate, which is further carboxylated by dmxL1 to form ethylmalonate. It is not yet clear whether the carboxylation occurs while the butyrate is attached to the ACP of dmxL2, but this unusual fungal metabolite could then be esterified to O-5 by the O-acetyltransferase dmxR13. Finally, dimerization performed by dmxR5 gives the observed dimers cryptosporioptides A, B and C as the final products of the pathway. The polypeptide is Dimeric xanthone biosynthesis cluster protein R11 (Cryptosporiopsis sp. (strain 8999)).